The following is a 547-amino-acid chain: Chaperonin GroEL 3 (547 aa).

ATP is bound by residues 30–33, Lys51, 87–91, Gly415, and Asp496; these read TLGP and DGTTT.

It belongs to the chaperonin (HSP60) family. In terms of assembly, forms a cylinder of 14 subunits composed of two heptameric rings stacked back-to-back. Interacts with the co-chaperonin GroES.

It is found in the cytoplasm. The enzyme catalyses ATP + H2O + a folded polypeptide = ADP + phosphate + an unfolded polypeptide.. Its function is as follows. Together with its co-chaperonin GroES, plays an essential role in assisting protein folding. The GroEL-GroES system forms a nano-cage that allows encapsulation of the non-native substrate proteins and provides a physical environment optimized to promote and accelerate protein folding. The chain is Chaperonin GroEL 3 from Bradyrhizobium sp. (strain ORS 278).